Reading from the N-terminus, the 87-residue chain is DNA-directed RNA polymerase subunit omega (87 aa).

This sequence belongs to the RNA polymerase subunit omega family. The RNAP catalytic core consists of 2 alpha, 1 beta, 1 beta' and 1 omega subunit. When a sigma factor is associated with the core the holoenzyme is formed, which can initiate transcription.

The catalysed reaction is RNA(n) + a ribonucleoside 5'-triphosphate = RNA(n+1) + diphosphate. Its function is as follows. Promotes RNA polymerase assembly. Latches the N- and C-terminal regions of the beta' subunit thereby facilitating its interaction with the beta and alpha subunits. The polypeptide is DNA-directed RNA polymerase subunit omega (Azotobacter vinelandii (strain DJ / ATCC BAA-1303)).